The primary structure comprises 209 residues: MKKAILGKKLGMTQIFNENGKVIPVTVIEAGPCTVIQKKTVEKDGYEAIQVAFGDIREKLRNKPVKGHFAKAGVSVKRHIKEFKLEDSNSLEIGQEIKADVFEAGERVDISGVSKGKGFQGTIRRWNAHRGPMSHGSKFHRAVGSMGASSDPSRTFKNKRMPGHMGNVNTTVLNLEVVKIIPEKNLILIKGGVPGPNKGLVQIRNTVKA.

It belongs to the universal ribosomal protein uL3 family. Part of the 50S ribosomal subunit. Forms a cluster with proteins L14 and L19.

In terms of biological role, one of the primary rRNA binding proteins, it binds directly near the 3'-end of the 23S rRNA, where it nucleates assembly of the 50S subunit. The sequence is that of Large ribosomal subunit protein uL3 from Clostridium botulinum (strain Okra / Type B1).